The sequence spans 155 residues: Protein PtsT (155 aa).

The chain is Protein PtsT (ptsT) from Geobacillus stearothermophilus (Bacillus stearothermophilus).